The primary structure comprises 489 residues: Glutamyl-tRNA(Gln) amidotransferase subunit A (489 aa).

Catalysis depends on charge relay system residues lysine 75 and serine 150. Serine 174 acts as the Acyl-ester intermediate in catalysis.

The protein belongs to the amidase family. GatA subfamily. Heterotrimer of A, B and C subunits.

It carries out the reaction L-glutamyl-tRNA(Gln) + L-glutamine + ATP + H2O = L-glutaminyl-tRNA(Gln) + L-glutamate + ADP + phosphate + H(+). Allows the formation of correctly charged Gln-tRNA(Gln) through the transamidation of misacylated Glu-tRNA(Gln) in organisms which lack glutaminyl-tRNA synthetase. The reaction takes place in the presence of glutamine and ATP through an activated gamma-phospho-Glu-tRNA(Gln). This is Glutamyl-tRNA(Gln) amidotransferase subunit A from Gloeobacter violaceus (strain ATCC 29082 / PCC 7421).